Consider the following 308-residue polypeptide: Oxygen-dependent coproporphyrinogen-III oxidase (308 aa).

Residue serine 97 coordinates substrate. A divalent metal cation-binding residues include histidine 101 and histidine 111. Histidine 111 functions as the Proton donor in the catalytic mechanism. Substrate is bound at residue 113 to 115 (NVR). 2 residues coordinate a divalent metal cation: histidine 153 and histidine 183. An important for dimerization region spans residues 248–283 (YVEFNLVWDRGTHFGLQSGGRTESILMSMPPLASWS). 266 to 268 (GGR) is a substrate binding site.

This sequence belongs to the aerobic coproporphyrinogen-III oxidase family. As to quaternary structure, homodimer. It depends on a divalent metal cation as a cofactor.

The protein localises to the cytoplasm. The catalysed reaction is coproporphyrinogen III + O2 + 2 H(+) = protoporphyrinogen IX + 2 CO2 + 2 H2O. The protein operates within porphyrin-containing compound metabolism; protoporphyrin-IX biosynthesis; protoporphyrinogen-IX from coproporphyrinogen-III (O2 route): step 1/1. Its function is as follows. Involved in the heme biosynthesis. Catalyzes the aerobic oxidative decarboxylation of propionate groups of rings A and B of coproporphyrinogen-III to yield the vinyl groups in protoporphyrinogen-IX. In Polaromonas sp. (strain JS666 / ATCC BAA-500), this protein is Oxygen-dependent coproporphyrinogen-III oxidase.